We begin with the raw amino-acid sequence, 984 residues long: Lateral signaling target protein 2 homolog (984 aa).

Disordered stretches follow at residues 308-462 (PLGS…DTDE), 508-527 (YGTT…PSTS), 539-642 (RLRL…SSLS), and 749-900 (DNVF…SPPA). Composition is skewed to low complexity over residues 326–356 (TTSS…TTST), 369–380 (NNHNSNSNSSTN), 387–404 (TLRS…TPTA), and 412–433 (PSHS…PADW). A compositionally biased stretch (acidic residues) spans 434 to 462 (SDGDDEDEDDDDIEVDEEDLESSDDDTDE). S544 and S545 each carry phosphoserine. Basic residues predominate over residues 571 to 611 (RESHSHRHHQRHHHHHHHRHSHQHQHRQPHPHRTTRSGRKR). Low complexity predominate over residues 630–642 (LASGDTSAASSLS). Composition is skewed to polar residues over residues 760-779 (ATGQ…TIDL) and 789-806 (SGAT…SRSL). S805 bears the Phosphoserine mark. 2 stretches are compositionally biased toward low complexity: residues 811 to 869 (AASS…PVSA) and 886 to 899 (PSSA…LSPP). The segment at 904–964 (DGKAPRCMAC…VCRDCYVREV (61 aa)) adopts an FYVE-type zinc-finger fold. Residues C910, C913, C926, C929, C934, C937, C956, and C959 each contribute to the Zn(2+) site.

The protein belongs to the lst-2 family.

In terms of biological role, negative regulator of epidermal growth factor receptor (EGFR) signaling. This chain is Lateral signaling target protein 2 homolog, found in Drosophila yakuba (Fruit fly).